The sequence spans 194 residues: FMN-dependent NADH:quinone oxidoreductase (194 aa).

FMN is bound by residues Ser-10 and 90-93 (MYNL).

The protein belongs to the azoreductase type 1 family. In terms of assembly, homodimer. It depends on FMN as a cofactor.

The enzyme catalyses 2 a quinone + NADH + H(+) = 2 a 1,4-benzosemiquinone + NAD(+). The catalysed reaction is N,N-dimethyl-1,4-phenylenediamine + anthranilate + 2 NAD(+) = 2-(4-dimethylaminophenyl)diazenylbenzoate + 2 NADH + 2 H(+). Its function is as follows. Quinone reductase that provides resistance to thiol-specific stress caused by electrophilic quinones. In terms of biological role, also exhibits azoreductase activity. Catalyzes the reductive cleavage of the azo bond in aromatic azo compounds to the corresponding amines. The chain is FMN-dependent NADH:quinone oxidoreductase from Haemophilus influenzae (strain PittEE).